We begin with the raw amino-acid sequence, 474 residues long: 3-isopropylmalate dehydratase large subunit (474 aa).

[4Fe-4S] cluster-binding residues include cysteine 353, cysteine 414, and cysteine 417.

This sequence belongs to the aconitase/IPM isomerase family. LeuC type 1 subfamily. As to quaternary structure, heterodimer of LeuC and LeuD. Requires [4Fe-4S] cluster as cofactor.

The catalysed reaction is (2R,3S)-3-isopropylmalate = (2S)-2-isopropylmalate. Its pathway is amino-acid biosynthesis; L-leucine biosynthesis; L-leucine from 3-methyl-2-oxobutanoate: step 2/4. In terms of biological role, catalyzes the isomerization between 2-isopropylmalate and 3-isopropylmalate, via the formation of 2-isopropylmaleate. This is 3-isopropylmalate dehydratase large subunit from Xylella fastidiosa (strain M12).